We begin with the raw amino-acid sequence, 356 residues long: Tetraacyldisaccharide 4'-kinase (356 aa).

ATP is bound at residue 51–58 (GWGGSGKT).

Belongs to the LpxK family.

It carries out the reaction a lipid A disaccharide + ATP = a lipid IVA + ADP + H(+). It functions in the pathway glycolipid biosynthesis; lipid IV(A) biosynthesis; lipid IV(A) from (3R)-3-hydroxytetradecanoyl-[acyl-carrier-protein] and UDP-N-acetyl-alpha-D-glucosamine: step 6/6. Transfers the gamma-phosphate of ATP to the 4'-position of a tetraacyldisaccharide 1-phosphate intermediate (termed DS-1-P) to form tetraacyldisaccharide 1,4'-bis-phosphate (lipid IVA). This chain is Tetraacyldisaccharide 4'-kinase, found in Oleidesulfovibrio alaskensis (strain ATCC BAA-1058 / DSM 17464 / G20) (Desulfovibrio alaskensis).